We begin with the raw amino-acid sequence, 301 residues long: MAKPLSITSSLPTFSVTWRAYFEMTKPKVVALMLLTVLVGMCLAVPHAVPVQPLLAGMLGIAMMAGSAAALNHLIDRRIDGLMARTYNRPLPKGRISATRALIFAASLGSLGFIVLYSLVNPLTAWLTFASLIGYALVYTAYLKRATSQNIVIGGLAGAMPPLLGWTAVTNEFHGHALLLVIIIFTWTPPHFWALAIHRRAEYAKVDIPMLPVTHGVEFTKTCILLYTVLLAIACLLPVLVGMCGPVYFVCSSLLSTGFIYKAWQLKYRDHDGSAMQVFRFSIYHLMLLFMALLLDHYLWN.

A run of 9 helical transmembrane segments spans residues 29–49, 51–71, 101–121, 123–143, 150–170, 177–197, 223–243, 244–264, and 275–295; these read VVALMLLTVLVGMCLAVPHAV, VQPLLAGMLGIAMMAGSAAAL, ALIFAASLGSLGFIVLYSLVN, LTAWLTFASLIGYALVYTAYL, NIVIGGLAGAMPPLLGWTAVT, ALLLVIIIFTWTPPHFWALAI, CILLYTVLLAIACLLPVLVGM, CGPVYFVCSSLLSTGFIYKAW, and AMQVFRFSIYHLMLLFMALLL.

It belongs to the UbiA prenyltransferase family. Protoheme IX farnesyltransferase subfamily.

Its subcellular location is the cell inner membrane. The enzyme catalyses heme b + (2E,6E)-farnesyl diphosphate + H2O = Fe(II)-heme o + diphosphate. The protein operates within porphyrin-containing compound metabolism; heme O biosynthesis; heme O from protoheme: step 1/1. Its function is as follows. Converts heme B (protoheme IX) to heme O by substitution of the vinyl group on carbon 2 of heme B porphyrin ring with a hydroxyethyl farnesyl side group. The chain is Protoheme IX farnesyltransferase 1 from Shewanella baltica (strain OS185).